Here is an 802-residue protein sequence, read N- to C-terminus: Leucine--tRNA ligase (802 aa).

The short motif at 40–51 is the 'HIGH' region element; sequence PYPSGAGLHVGH. The 'KMSKS' region motif lies at 576–580; the sequence is KMSKS. Position 579 (lysine 579) interacts with ATP.

This sequence belongs to the class-I aminoacyl-tRNA synthetase family.

It is found in the cytoplasm. It catalyses the reaction tRNA(Leu) + L-leucine + ATP = L-leucyl-tRNA(Leu) + AMP + diphosphate. The chain is Leucine--tRNA ligase from Bacillus mycoides (strain KBAB4) (Bacillus weihenstephanensis).